Consider the following 291-residue polypeptide: 4,5:9,10-diseco-3-hydroxy-5,9,17-trioxoandrosta-1(10),2-diene-4-oate hydrolase (291 aa).

Substrate-binding positions include 45–46 (GG), asparagine 54, asparagine 113, leucine 115, and arginine 192. The Proton acceptor role is filled by histidine 269. Tryptophan 270 contributes to the substrate binding site.

It belongs to the AB hydrolase superfamily. HsaD family. Homodimer.

It carries out the reaction (1E,2Z)-3-hydroxy-5,9,17-trioxo-4,5:9,10-disecoandrosta-1(10),2-dien-4-oate + H2O = 3-[(3aS,4S,7aS)-7a-methyl-1,5-dioxo-octahydro-1H-inden-4-yl]propanoate + (2Z,4Z)-2-hydroxyhexa-2,4-dienoate + H(+). The enzyme catalyses 2,6-dioxo-6-phenylhexa-3-enoate + H2O = 2-oxopent-4-enoate + benzoate + H(+). Its pathway is lipid metabolism; steroid biosynthesis. Catalyzes the hydrolysis of a carbon-carbon bond in 4,5: 9,10-diseco-3-hydroxy-5,9,17-trioxoandrosta-1(10),2-diene-4-oate (4,9-DSHA) to yield 9,17-dioxo-1,2,3,4,10,19-hexanorandrostan-5-oate (DOHNAA) and 2-hydroxy-hexa-2,4-dienoate (HHD). Is also able to catalyze the hydrolysis of 2-hydroxy-6-oxo-6-phenylhexa-2,4-dienoic acid (HOPDA) and the synthetic analog 8-(2-chlorophenyl)-2-hydroxy-5-methyl-6-oxoocta-2,4-dienoic acid (HOPODA). The sequence is that of 4,5:9,10-diseco-3-hydroxy-5,9,17-trioxoandrosta-1(10),2-diene-4-oate hydrolase (hsaD) from Mycobacterium tuberculosis (strain ATCC 25618 / H37Rv).